The chain runs to 209 residues: Protein lin-28 homolog A (209 aa).

A disordered region spans residues 1–31 (MGSVSNQQFAGGCAKAAEKAPEEAPPDAARA). The residue at position 2 (G2) is an N-acetylglycine. Residue S3 is modified to Phosphoserine. Residues 39 to 112 (HGAGICKWFN…GLESIRVTGP (74 aa)) form the CSD domain. A flexible linker region spans residues 113–136 (GGVFCIGSERRPKGKNMQKRRSKG). S120 is subject to Phosphoserine. CCHC-type zinc fingers lie at residues 137–154 (DRCY…ECKL) and 159–176 (KKCH…SCPL). The interval 177–209 (KAQQGPSSQGKPAYFREEEEEIHSPALLPEAQN) is disordered. Residue S200 is modified to Phosphoserine.

Belongs to the lin-28 family. In terms of assembly, monomer. During skeletal muscle differentiation, associated with translation initiation complexes in the polysomal compartment. Directly interacts with EIF3S2. Interacts with NCL in an RNA-dependent manner. Interacts with TUT4 in the presence of pre-let-7 RNA. Expressed in embryonic stem cells (ES cells), spermatagonia and testis. Expressed in numerous epithelial tissues including the epithelia of the small intestine, the intralobular duct epithelium of the mammary gland and the epithelia of Henle's loop in the kidney and in the collecting duct (at protein level). Also expressed in the myocardium and skeletal muscle (at protein level).

It localises to the cytoplasm. The protein resides in the rough endoplasmic reticulum. Its subcellular location is the P-body. It is found in the stress granule. The protein localises to the nucleus. It localises to the nucleolus. In terms of biological role, RNA-binding protein that inhibits processing of pre-let-7 miRNAs and regulates translation of mRNAs that control developmental timing, pluripotency and metabolism. Seems to recognize a common structural G-quartet (G4) feature in its miRNA and mRNA targets. 'Translational enhancer' that drives specific mRNAs to polysomes and increases the efficiency of protein synthesis. Its association with the translational machinery and target mRNAs results in an increased number of initiation events per molecule of mRNA and, indirectly, in mRNA stabilization. Binds IGF2 mRNA, MYOD1 mRNA, ARBP/36B4 ribosomal protein mRNA and its own mRNA. Essential for skeletal muscle differentiation program through the translational up-regulation of IGF2 expression. Suppressor of microRNA (miRNA) biogenesis, including that of let-7, miR107, miR-143 and miR-200c. Specifically binds the miRNA precursors (pre-miRNAs), recognizing an 5'-GGAG-3' motif found in pre-miRNA terminal loop, and recruits TUT4 and TUT7 uridylyltransferaseS. This results in the terminal uridylation of target pre-miRNAs. Uridylated pre-miRNAs fail to be processed by Dicer and undergo degradation. The repression of let-7 expression is required for normal development and contributes to maintain the pluripotent state by preventing let-7-mediated differentiation of embryonic stem cells. Localized to the periendoplasmic reticulum area, binds to a large number of spliced mRNAs and inhibits the translation of mRNAs destined for the ER, reducing the synthesis of transmembrane proteins, ER or Golgi lumen proteins, and secretory proteins. Binds to and enhances the translation of mRNAs for several metabolic enzymes, such as PFKP, PDHA1 or SDHA, increasing glycolysis and oxidative phosphorylation. Which, with the let-7 repression may enhance tissue repair in adult tissue. The sequence is that of Protein lin-28 homolog A (Lin28a) from Mus musculus (Mouse).